A 95-amino-acid chain; its full sequence is Aspartyl/glutamyl-tRNA(Asn/Gln) amidotransferase subunit C (95 aa).

The protein belongs to the GatC family. In terms of assembly, heterotrimer of A, B and C subunits.

The enzyme catalyses L-glutamyl-tRNA(Gln) + L-glutamine + ATP + H2O = L-glutaminyl-tRNA(Gln) + L-glutamate + ADP + phosphate + H(+). It catalyses the reaction L-aspartyl-tRNA(Asn) + L-glutamine + ATP + H2O = L-asparaginyl-tRNA(Asn) + L-glutamate + ADP + phosphate + 2 H(+). Allows the formation of correctly charged Asn-tRNA(Asn) or Gln-tRNA(Gln) through the transamidation of misacylated Asp-tRNA(Asn) or Glu-tRNA(Gln) in organisms which lack either or both of asparaginyl-tRNA or glutaminyl-tRNA synthetases. The reaction takes place in the presence of glutamine and ATP through an activated phospho-Asp-tRNA(Asn) or phospho-Glu-tRNA(Gln). The sequence is that of Aspartyl/glutamyl-tRNA(Asn/Gln) amidotransferase subunit C from Roseobacter denitrificans (strain ATCC 33942 / OCh 114) (Erythrobacter sp. (strain OCh 114)).